Here is a 747-residue protein sequence, read N- to C-terminus: WD repeat-containing protein 91 (747 aa).

A coiled-coil region spans residues 183 to 227 (QRTNQVQEENEVLRQKLFALQAEVHRLKKEEQQQEEAAALVQHKL). S256 bears the Phosphoserine mark. Over residues 265–278 (LLPQSKKSPSRLSP) the composition is skewed to low complexity. Positions 265–358 (LLPQSKKSPS…SQTQCAEKKL (94 aa)) are disordered. Positions 283–299 (PQAQSSAKKDTFSSQAT) are enriched in polar residues. The residue at position 288 (S288) is a Phosphoserine. The span at 332-343 (RLQDHGKERREL) shows a compositional bias: basic and acidic residues. The segment covering 344–353 (LSTSSSQTQC) has biased composition (polar residues). WD repeat units lie at residues 406–445 (EHHS…QTKA), 448–488 (ISKS…NLCE), 511–555 (VCSA…QQLQ), 560–599 (PEPI…CAMS), 602–641 (AHCG…LKVS), 664–702 (VQVP…KVLE), and 709–747 (GHRA…AHKL).

The protein belongs to the WD repeat WDR91 family. In terms of assembly, interacts with WDR81; involved in early to late endosome cargo transport. Interacts with BECN1; negatively regulates the PI3 kinase/PI3K activity associated with endosomal membranes.

The protein resides in the early endosome membrane. It is found in the late endosome membrane. Functions as a negative regulator of the PI3 kinase/PI3K activity associated with endosomal membranes via BECN1, a core subunit of the PI3K complex. By modifying the phosphatidylinositol 3-phosphate/PtdInsP3 content of endosomal membranes may regulate endosome fusion, recycling, sorting and early to late endosome transport. It is for instance, required for the delivery of cargos like BST2/tetherin from early to late endosome and thereby participates indirectly to their degradation by the lysosome. May play a role in meiosis. This Rattus norvegicus (Rat) protein is WD repeat-containing protein 91.